A 109-amino-acid polypeptide reads, in one-letter code: MIKLKVKKGDEVVVITGKHKGKKGKILKVFPEDSKVIVSGVNVVKKHTKSNQMSEGGIITKELPIHISNIAHIDPKTGNPTKVAFKFLEDGSKVRVAKKSGEIIGKEGK.

The protein belongs to the universal ribosomal protein uL24 family. Part of the 50S ribosomal subunit.

Its function is as follows. One of two assembly initiator proteins, it binds directly to the 5'-end of the 23S rRNA, where it nucleates assembly of the 50S subunit. One of the proteins that surrounds the polypeptide exit tunnel on the outside of the subunit. The chain is Large ribosomal subunit protein uL24 from Rickettsia africae (strain ESF-5).